A 124-amino-acid polypeptide reads, in one-letter code: Salivary protein 15 Iric-3 (124 aa).

The N-terminal stretch at 1 to 22 (MESFVAMKVVCIILLFVIAAEA) is a signal peptide. Residues asparagine 82 and asparagine 93 are each glycosylated (N-linked (GlcNAc...) asparagine). Residues 105–124 (GPNNQTCHKKDECVGYIPGC) form a CD4-binding region.

The protein belongs to the salp15 family. As to quaternary structure, interacts with host CD4. Interacts with host DC-SIGN (CD209). Interacts with Borrelia outer surface protein C (OspC). As to expression, expressed in salivary glands. Detected in fed adult female.

Its subcellular location is the secreted. Functionally, salivary tick protein that downregulates host immune system by binding to both dendritic cells, and CD4(+) T cells. Specifically binds to the CD4 coreceptor on T cells. This interaction prevents the activation of the Src kinase, Lck, and its downstream substrate Zap-70, and results in deficient activation of PLCgamma1, the repression of calcium fluxes triggered by T-cell antigen receptor (TCR) ligation, and a subsequent reduction in interleukin-2 production. This salivary protein also binds to DC-SIGN (CD209) on dendritic cells (DC) and activates the Raf-1 kinase/MEK signaling pathway that results in down-regulating expression of pro-inflammatory cytokines. Furthermore, it inhibits T cell proliferation induced by DCs. In addition, it inhibits in vitro keratinocyte inflammation induced by Borrelia burgdorferi or by the major outer surface protein (OspC) of Borrelia. In addition, it downregulates chemokines and monocyte chemoattractant protein 1, as well as several antimicrobial peptides such as defensins, cathelicidin, psoriasin, and RNase 7. Apart from its immunomodulatory activities, it is also associated with protection of Borrelia spirochetes from antibody-mediated killing through its binding to OspC. In vivo, tests on different immune disease animal models show promising therapeutic results, e.g., in inhibiting HIV infection, experimental autoimmune encephalomyelitis, transplantation rejection, and asthma. The chain is Salivary protein 15 Iric-3 from Ixodes ricinus (Common tick).